Reading from the N-terminus, the 526-residue chain is Tyrosine-protein kinase transforming protein Src (526 aa).

Positions 1–15 are enriched in basic residues; it reads MGSSKSKPKGPSQRR. Residues 1-59 form a disordered region; that stretch reads MGSSKSKPKGPSQRRRSLEPPDSTHHGGFPASQTPNKTAAPDTHRTPSRSFGTVATEPK. A lipid anchor (N-myristoyl glycine; by host) is attached at Gly-2. Basic and acidic residues predominate over residues 16-25; it reads RSLEPPDSTH. In terms of domain architecture, SH3 spans 81–142; that stretch reads GGVTTFVALY…PSNYVAPSDS (62 aa). One can recognise an SH2 domain in the interval 148 to 245; sequence WYFGKITRRE…GLCHRLTNVC (98 aa). Residues 267 to 517 form the Protein kinase domain; that stretch reads LRLEVKLGQG…TFEYLQAQLL (251 aa). ATP is bound by residues 273-281 and Lys-295; that span reads LGQGCFGEV. The active-site Proton acceptor is Asp-386. Residue Tyr-416 is modified to Phosphotyrosine; by autocatalysis.

Belongs to the protein kinase superfamily. Tyr protein kinase family. SRC subfamily. As to quaternary structure, homodimer. The phosphorylated form is termed pp60v-src.

The enzyme catalyses L-tyrosyl-[protein] + ATP = O-phospho-L-tyrosyl-[protein] + ADP + H(+). This phosphoprotein, required for both the initiation and the maintenance of neoplastic transformation, is a protein kinase that catalyzes the phosphorylation of tyrosine residues in vitro. The chain is Tyrosine-protein kinase transforming protein Src (V-SRC) from Rous sarcoma virus subgroup E (strain Schmidt-Ruppin) (RSV-SR-E).